Consider the following 417-residue polypeptide: Sterile alpha motif domain-containing protein 14 (417 aa).

Positions 36–302 are disordered; sequence QLLAKGRRHR…GGPRQETKCS (267 aa). Basic residues predominate over residues 40 to 49; sequence KGRRHRPSRS. Residues serine 84 and serine 108 each carry the phosphoserine modification. Residues 138–153 are compositionally biased toward low complexity; it reads SGSPPRSAPSSDSSPS. The segment covering 159–173 has biased composition (basic and acidic residues); sequence PRAEPHSEDDSRDAS. Phosphoserine is present on residues serine 173 and serine 179. Composition is skewed to low complexity over residues 244–260 and 276–289; these read SGKGSASSGSTTSPTCS and STLSDDSTPPSSSP. A Phosphoserine modification is found at serine 279. Threonine 283 carries the phosphothreonine modification. In terms of domain architecture, SAM spans 326–389; the sequence is WTSQQVGQWL…KRKLKELAAA (64 aa). Residues 375-416 are a coiled coil; that stretch reads DRALVKRKLKELAAAAEKERKAQEKTAKQREKLRRRENDAKK. Residues 390–417 are disordered; it reads AEKERKAQEKTAKQREKLRRRENDAKKS.

The polypeptide is Sterile alpha motif domain-containing protein 14 (Samd14) (Mus musculus (Mouse)).